The primary structure comprises 344 residues: N-acetyl-gamma-glutamyl-phosphate reductase (344 aa).

Cys-150 is an active-site residue.

It belongs to the NAGSA dehydrogenase family. Type 1 subfamily.

The protein resides in the cytoplasm. The enzyme catalyses N-acetyl-L-glutamate 5-semialdehyde + phosphate + NADP(+) = N-acetyl-L-glutamyl 5-phosphate + NADPH + H(+). Its pathway is amino-acid biosynthesis; L-arginine biosynthesis; N(2)-acetyl-L-ornithine from L-glutamate: step 3/4. Its function is as follows. Catalyzes the NADPH-dependent reduction of N-acetyl-5-glutamyl phosphate to yield N-acetyl-L-glutamate 5-semialdehyde. The sequence is that of N-acetyl-gamma-glutamyl-phosphate reductase from Pseudomonas paraeruginosa (strain DSM 24068 / PA7) (Pseudomonas aeruginosa (strain PA7)).